The sequence spans 494 residues: MGDDQSLRSTVAENDISANLSFTQGFLLGQLSVVLLIGAFIKFFIFGEAPPPPSRGLSHRASTHRRSNSIYTINPNEGTSRSLREKPSTSNVLRPVPSSATNTRSILRKTYYSAIPTNPSGKHGRHRIHHSSHQPESLDWFNVLIAQTIAQYRQTAYLLKDDPTSSILSSLTAALNNPEKKPSFIDKIAVTDISLGEEFPIFSNCRIIAVDDPNSDGGRLQALLDVDLSDDNLSIAVETSLLLNYPKPCSAILPVALSISVVRFSGTLCISLVPASTPPLHTPSPSPSPPTADGAVNAGTHPTNGSREPTQEAPNAQEESPPKTSPKSNVAFSFLPDYRLDLSVRSLIGSRSRLQDVPKVAQLVEARVHSWFEERVVEPRVQVVGLPDLWPRMGRTGVRTGEDSETGSNAASRSAMSADMGNSLRADDIGREPDGLRFRGLGARPPFDSVSRTSSFNVETGGFRSHSMTREGSGGGMSDDFHMPGTLPGGAAAN.

Residues 1 to 25 (MGDDQSLRSTVAENDISANLSFTQG) lie on the Lumenal side of the membrane. The helical transmembrane segment at 26 to 46 (FLLGQLSVVLLIGAFIKFFIF) threads the bilayer. Topologically, residues 47–494 (GEAPPPPSRG…GTLPGGAAAN (448 aa)) are cytoplasmic. Disordered regions lie at residues 53 to 99 (PSRG…VPSS), 278 to 330 (PPLH…KSNV), and 395 to 494 (RTGV…AAAN). Residues 57-67 (LSHRASTHRRS) are compositionally biased toward basic residues. 2 stretches are compositionally biased toward polar residues: residues 68-81 (NSIY…GTSR) and 88-99 (STSNVLRPVPSS). One can recognise an SMP-LTD domain in the interval 134–387 (QPESLDWFNV…EPRVQVVGLP (254 aa)). Residues 278-290 (PPLHTPSPSPSPP) show a composition bias toward pro residues. Polar residues-rich tracts occupy residues 300–318 (THPT…NAQE) and 406–415 (TGSNAASRSA). The segment covering 425 to 437 (RADDIGREPDGLR) has biased composition (basic and acidic residues).

It belongs to the MMM1 family. Homodimer. Component of the ER-mitochondria encounter structure (ERMES) or MDM complex, composed of mmm1, mdm10, mdm12 and mdm34. A mmm1 homodimer associates with one molecule of mdm12 on each side in a pairwise head-to-tail manner, and the SMP-LTD domains of mmm1 and mdm12 generate a continuous hydrophobic tunnel for phospholipid trafficking.

Its subcellular location is the endoplasmic reticulum membrane. In terms of biological role, component of the ERMES/MDM complex, which serves as a molecular tether to connect the endoplasmic reticulum (ER) and mitochondria. Components of this complex are involved in the control of mitochondrial shape and protein biogenesis, and function in nonvesicular lipid trafficking between the ER and mitochondria. The mdm12-mmm1 subcomplex functions in the major beta-barrel assembly pathway that is responsible for biogenesis of all outer membrane beta-barrel proteins, and acts in a late step after the SAM complex. The mdm10-mdm12-mmm1 subcomplex further acts in the TOM40-specific pathway after the action of the mdm12-mmm1 complex. Essential for establishing and maintaining the structure of mitochondria and maintenance of mtDNA nucleoids. This Aspergillus oryzae (strain ATCC 42149 / RIB 40) (Yellow koji mold) protein is Maintenance of mitochondrial morphology protein 1.